A 193-amino-acid polypeptide reads, in one-letter code: dCTP deaminase, dUMP-forming (193 aa).

DCTP-binding positions include 101-106 (KSSLGR), D119, 127-129 (TLE), Q148, Y162, and Q174. The Proton donor/acceptor role is filled by E129. Positions 162–184 (YGSKGTGSHYQGQRGPTPSRSYE) are disordered. A compositionally biased stretch (polar residues) spans 167–183 (TGSHYQGQRGPTPSRSY).

Belongs to the dCTP deaminase family. As to quaternary structure, homotrimer.

The catalysed reaction is dCTP + 2 H2O = dUMP + NH4(+) + diphosphate. It participates in pyrimidine metabolism; dUMP biosynthesis; dUMP from dCTP: step 1/1. In terms of biological role, bifunctional enzyme that catalyzes both the deamination of dCTP to dUTP and the hydrolysis of dUTP to dUMP without releasing the toxic dUTP intermediate. The polypeptide is dCTP deaminase, dUMP-forming (Bifidobacterium longum (strain DJO10A)).